Reading from the N-terminus, the 127-residue chain is Small ribosomal subunit protein uS11 (127 aa).

Belongs to the universal ribosomal protein uS11 family. As to quaternary structure, part of the 30S ribosomal subunit.

Located on the platform of the 30S subunit. The chain is Small ribosomal subunit protein uS11 from Picrophilus torridus (strain ATCC 700027 / DSM 9790 / JCM 10055 / NBRC 100828 / KAW 2/3).